Reading from the N-terminus, the 177-residue chain is Parathyroid hormone-related protein (177 aa).

An N-terminal signal peptide occupies residues 1-24 (MLRRLVQQWSVAVFLLSYSVPSCG). The propeptide occupies 25-34 (RSVEGPGRRL). An important for receptor binding region spans residues 57–68 (RFFLHHLIAEIH). Positions 74–177 (ATSEVSPNSK…PEPELDSRRH (104 aa)) are disordered. Residues 76–90 (SEVSPNSKPAANTKN) show a composition bias toward polar residues. The Nuclear localization signal signature appears at 108–129 (TNKVEPYKEQPLKTPGKKKKGK). Residues 109–118 (NKVEPYKEQP) show a composition bias toward basic and acidic residues. Residues 122 to 132 (PGKKKKGKPGK) show a composition bias toward basic residues.

This sequence belongs to the parathyroid hormone family. PTHrP interacts with PTH1R (via N-terminal extracellular domain). There are several secretory forms, including osteostatin, arising from endoproteolytic cleavage of the initial translation product. Each of these secretory forms is believed to have one or more of its own receptors that mediates the normal paracrine, autocrine and endocrine actions.

Its subcellular location is the secreted. It is found in the cytoplasm. The protein resides in the nucleus. Functionally, neuroendocrine peptide which is a critical regulator of cellular and organ growth, development, migration, differentiation and survival and of epithelial calcium ion transport. Acts by binding to its receptor, PTH1R, activating G protein-coupled receptor signaling. Regulates endochondral bone development and epithelial-mesenchymal interactions during the formation of the mammary glands and teeth. Required for skeletal homeostasis. Promotes mammary mesenchyme differentiation and bud outgrowth by modulating mesenchymal cell responsiveness to BMPs. Up-regulates BMPR1A expression in the mammary mesenchyme and this increases the sensitivity of these cells to BMPs and allows them to respond to BMP4 in a paracrine and/or autocrine fashion. BMP4 signaling in the mesenchyme, in turn, triggers epithelial outgrowth and augments MSX2 expression, which causes the mammary mesenchyme to inhibit hair follicle formation within the nipple sheath. In terms of biological role, potent inhibitor of osteoclastic bone resorption. This Oryctolagus cuniculus (Rabbit) protein is Parathyroid hormone-related protein (PTHLH).